The chain runs to 205 residues: Imidazoleglycerol-phosphate dehydratase (205 aa).

Belongs to the imidazoleglycerol-phosphate dehydratase family.

The protein resides in the cytoplasm. The enzyme catalyses D-erythro-1-(imidazol-4-yl)glycerol 3-phosphate = 3-(imidazol-4-yl)-2-oxopropyl phosphate + H2O. It participates in amino-acid biosynthesis; L-histidine biosynthesis; L-histidine from 5-phospho-alpha-D-ribose 1-diphosphate: step 6/9. In Chloroflexus aggregans (strain MD-66 / DSM 9485), this protein is Imidazoleglycerol-phosphate dehydratase.